A 290-amino-acid chain; its full sequence is Protease HtpX (290 aa).

2 helical membrane passes run 4–24 and 36–56; these read IMLFLATNLAVLIIASITLKL and GSLLIFCAVFGFAGSLVSLFI. A Zn(2+)-binding site is contributed by His-142. Glu-143 is an active-site residue. Residue His-146 coordinates Zn(2+). 2 consecutive transmembrane segments (helical) span residues 150-170 and 193-213; these read GDMVTLALIQGVVNTFVMFFA and FIATIFAELVLGILASIIVMW. Glu-219 is a Zn(2+) binding site.

Belongs to the peptidase M48B family. Zn(2+) is required as a cofactor.

The protein resides in the cell inner membrane. In Ectopseudomonas mendocina (strain ymp) (Pseudomonas mendocina), this protein is Protease HtpX.